Reading from the N-terminus, the 574-residue chain is MEASLGIQMDEPMAFSPQRDRFQAEGSLKKNEQNFKLAGVKKDIEKLYEAVPQLSNVFKIEDKIGEGTFSSVYLATAQLQVGPEEKIALKHLIPTSHPIRIAAELQCLTVAGGQDNVMGVKYCFRKNDHVVIAMPYLEHESFLDILNSLSFQEVREYMLNLFKALKRIHQFGIVHRDVKPSNFLYNRRLKKYALVDFGLAQGTHDTKIELLKFVQSEAQQERCSQNKSHIITGNKIPLSGPVPKELDQQSTTKASVKRPYTNAQIQIKQGKDGKEGSVGLSVQRSVFGERNFNIHSSISHESPAVKLMKQSKTVDVLSRKLATKKKAISTKVMNSAVMRKTASSCPASLTCDCYATDKVCSICLSRRQQVAPRAGTPGFRAPEVLTKCPNQTTAIDMWSAGVIFLSLLSGRYPFYKASDDLTALAQIMTIRGSRETIQAAKTFGKSILCSKEVPAQDLRKLCERLRGMDSSTPKLTSDIQGHASHQPAISEKTDHKASCLVQTPPGQYSGNSFKKGDSNSCEHCFDEYNTNLEGWNEVPDEAYDLLDKLLDLNPASRITAEEALLHPFFKDMSL.

Residue Ser-27 is modified to Phosphoserine. The Protein kinase domain maps to 58 to 574; the sequence is FKIEDKIGEG…LHPFFKDMSL (517 aa). ATP contacts are provided by residues 64–72 and Lys-90; that span reads IGEGTFSSV. Asp-177 (proton acceptor) is an active-site residue. Lys-268 is covalently cross-linked (Glycyl lysine isopeptide (Lys-Gly) (interchain with G-Cter in SUMO2)). A Phosphothreonine modification is found at Thr-503.

It belongs to the protein kinase superfamily. Ser/Thr protein kinase family. CDC7 subfamily. Forms a complex with either DBF4/DBF4A or DBF4B, leading to the activation of the kinase activity. Interacts with CLASPIN (via the acidic patch); the interaction is required for phosphorylation of MCM proteins and CLASPIN. Mg(2+) is required as a cofactor.

The protein localises to the nucleus. The catalysed reaction is L-seryl-[protein] + ATP = O-phospho-L-seryl-[protein] + ADP + H(+). It carries out the reaction L-threonyl-[protein] + ATP = O-phospho-L-threonyl-[protein] + ADP + H(+). In terms of biological role, kinase involved in initiation of DNA replication. Phosphorylates critical substrates that regulate the G1/S phase transition and initiation of DNA replication, such as MCM proteins and CLASPIN. The chain is Cell division cycle 7-related protein kinase from Homo sapiens (Human).